Here is a 223-residue protein sequence, read N- to C-terminus: GTP cyclohydrolase 1 (223 aa).

Cys111, His114, and Cys182 together coordinate Zn(2+).

The protein belongs to the GTP cyclohydrolase I family. As to quaternary structure, homomer.

It catalyses the reaction GTP + H2O = 7,8-dihydroneopterin 3'-triphosphate + formate + H(+). Its pathway is cofactor biosynthesis; 7,8-dihydroneopterin triphosphate biosynthesis; 7,8-dihydroneopterin triphosphate from GTP: step 1/1. The protein is GTP cyclohydrolase 1 of Flavobacterium johnsoniae (strain ATCC 17061 / DSM 2064 / JCM 8514 / BCRC 14874 / CCUG 350202 / NBRC 14942 / NCIMB 11054 / UW101) (Cytophaga johnsonae).